Here is a 354-residue protein sequence, read N- to C-terminus: UDP-N-acetylglucosamine--N-acetylmuramyl-(pentapeptide) pyrophosphoryl-undecaprenol N-acetylglucosamine transferase 3 (354 aa).

UDP-N-acetyl-alpha-D-glucosamine is bound by residues 12 to 14 (TAG), Arg163, Ser193, and Gln287.

Belongs to the glycosyltransferase 28 family. MurG subfamily.

The protein localises to the cell membrane. The catalysed reaction is di-trans,octa-cis-undecaprenyl diphospho-N-acetyl-alpha-D-muramoyl-L-alanyl-D-glutamyl-meso-2,6-diaminopimeloyl-D-alanyl-D-alanine + UDP-N-acetyl-alpha-D-glucosamine = di-trans,octa-cis-undecaprenyl diphospho-[N-acetyl-alpha-D-glucosaminyl-(1-&gt;4)]-N-acetyl-alpha-D-muramoyl-L-alanyl-D-glutamyl-meso-2,6-diaminopimeloyl-D-alanyl-D-alanine + UDP + H(+). It participates in cell wall biogenesis; peptidoglycan biosynthesis. Functionally, cell wall formation. Catalyzes the transfer of a GlcNAc subunit on undecaprenyl-pyrophosphoryl-MurNAc-pentapeptide (lipid intermediate I) to form undecaprenyl-pyrophosphoryl-MurNAc-(pentapeptide)GlcNAc (lipid intermediate II). This chain is UDP-N-acetylglucosamine--N-acetylmuramyl-(pentapeptide) pyrophosphoryl-undecaprenol N-acetylglucosamine transferase 3, found in Bacillus cereus (strain ATCC 14579 / DSM 31 / CCUG 7414 / JCM 2152 / NBRC 15305 / NCIMB 9373 / NCTC 2599 / NRRL B-3711).